A 67-amino-acid polypeptide reads, in one-letter code: Large ribosomal subunit protein bL32 (67 aa).

The span at 1–19 shows a compositional bias: basic residues; sequence MAVPKRKMSRSNTRARRSQ. The segment at 1-21 is disordered; the sequence is MAVPKRKMSRSNTRARRSQWK.

Belongs to the bacterial ribosomal protein bL32 family.

The polypeptide is Large ribosomal subunit protein bL32 (Arthrobacter sp. (strain FB24)).